The sequence spans 262 residues: Glucosamine-6-phosphate deaminase (262 aa).

The Proton acceptor; for enolization step role is filled by aspartate 63. The active-site For ring-opening step is the asparagine 129. Histidine 131 (proton acceptor; for ring-opening step) is an active-site residue. Residue glutamate 136 is the For ring-opening step of the active site.

Belongs to the glucosamine/galactosamine-6-phosphate isomerase family. NagB subfamily.

It carries out the reaction alpha-D-glucosamine 6-phosphate + H2O = beta-D-fructose 6-phosphate + NH4(+). The protein operates within amino-sugar metabolism; N-acetylneuraminate degradation; D-fructose 6-phosphate from N-acetylneuraminate: step 5/5. Its function is as follows. Catalyzes the reversible isomerization-deamination of glucosamine 6-phosphate (GlcN6P) to form fructose 6-phosphate (Fru6P) and ammonium ion. This chain is Glucosamine-6-phosphate deaminase, found in Bacillus cytotoxicus (strain DSM 22905 / CIP 110041 / 391-98 / NVH 391-98).